A 242-amino-acid chain; its full sequence is Carboxy-S-adenosyl-L-methionine synthase (242 aa).

Residues Y39, 64-66 (GCS), 89-90 (DN), 117-118 (DI), N132, and R199 contribute to the S-adenosyl-L-methionine site.

It belongs to the class I-like SAM-binding methyltransferase superfamily. Cx-SAM synthase family. As to quaternary structure, homodimer.

It carries out the reaction prephenate + S-adenosyl-L-methionine = carboxy-S-adenosyl-L-methionine + 3-phenylpyruvate + H2O. Catalyzes the conversion of S-adenosyl-L-methionine (SAM) to carboxy-S-adenosyl-L-methionine (Cx-SAM). This chain is Carboxy-S-adenosyl-L-methionine synthase, found in Aliivibrio fischeri (strain MJ11) (Vibrio fischeri).